The chain runs to 159 residues: MQCPTCQNTDSRVLESRSADTGKSVRRRRECLNCSFRFTTYERVETMPISVLKKDGSRELFNKDKLVTGISRACEKTTFSREAIIDFVDSIESQIIQDSNKDIKSSQIGELILKGLRKENEVAYIRYASVYRKFNGVKDFVSTLESLKGSSKNELASIL.

The segment at 3 to 34 (CPTCQNTDSRVLESRSADTGKSVRRRRECLNC) is a zinc-finger region. Residues 49–139 (ISVLKKDGSR…VYRKFNGVKD (91 aa)) enclose the ATP-cone domain.

The protein belongs to the NrdR family. Zn(2+) serves as cofactor.

Its function is as follows. Negatively regulates transcription of bacterial ribonucleotide reductase nrd genes and operons by binding to NrdR-boxes. The polypeptide is Transcriptional repressor NrdR (Prochlorococcus marinus (strain MIT 9515)).